The chain runs to 471 residues: Ribulose bisphosphate carboxylase large chain (471 aa).

The substrate site is built by N119 and T169. The active-site Proton acceptor is K171. K173 contacts substrate. Mg(2+)-binding residues include K197, D199, and E200. Residue K197 is modified to N6-carboxylysine. Catalysis depends on H290, which acts as the Proton acceptor. 3 residues coordinate substrate: R291, H323, and S375.

The protein belongs to the RuBisCO large chain family. Type I subfamily. Heterohexadecamer of 8 large chains and 8 small chains; disulfide-linked. The disulfide link is formed within the large subunit homodimers. Mg(2+) is required as a cofactor. Post-translationally, the disulfide bond which can form in the large chain dimeric partners within the hexadecamer appears to be associated with oxidative stress and protein turnover.

Its subcellular location is the carboxysome. The enzyme catalyses 2 (2R)-3-phosphoglycerate + 2 H(+) = D-ribulose 1,5-bisphosphate + CO2 + H2O. The catalysed reaction is D-ribulose 1,5-bisphosphate + O2 = 2-phosphoglycolate + (2R)-3-phosphoglycerate + 2 H(+). RuBisCO catalyzes two reactions: the carboxylation of D-ribulose 1,5-bisphosphate, the primary event in carbon dioxide fixation, as well as the oxidative fragmentation of the pentose substrate in the photorespiration process. Both reactions occur simultaneously and in competition at the same active site. The protein is Ribulose bisphosphate carboxylase large chain of Crocosphaera subtropica (strain ATCC 51142 / BH68) (Cyanothece sp. (strain ATCC 51142)).